The sequence spans 320 residues: 1-aminocyclopropane-1-carboxylate oxidase 3 (320 aa).

The 101-residue stretch at 154 to 254 folds into the Fe2OG dioxygenase domain; it reads PNFGTKVSNY…RMSIASFYNP (101 aa). Fe cation contacts are provided by histidine 178, aspartate 180, and histidine 235.

Belongs to the iron/ascorbate-dependent oxidoreductase family. Fe cation is required as a cofactor. As to expression, flowers.

The catalysed reaction is 1-aminocyclopropane-1-carboxylate + L-ascorbate + O2 = ethene + L-dehydroascorbate + hydrogen cyanide + CO2 + 2 H2O. It functions in the pathway alkene biosynthesis; ethylene biosynthesis via S-adenosyl-L-methionine; ethylene from S-adenosyl-L-methionine: step 2/2. The polypeptide is 1-aminocyclopropane-1-carboxylate oxidase 3 (ACO3) (Cucumis melo (Muskmelon)).